We begin with the raw amino-acid sequence, 278 residues long: 2-(acetamidomethylene)succinate hydrolase (278 aa).

Chloride is bound by residues isoleucine 41 and 106-107 (SL). Catalysis depends on serine 106, which acts as the Nucleophile. Catalysis depends on residues aspartate 130 and histidine 258.

It belongs to the AB hydrolase superfamily. Homodimer.

The enzyme catalyses 2-(acetamidomethylene)succinate + 2 H2O + H(+) = succinate semialdehyde + acetate + NH4(+) + CO2. It participates in cofactor degradation; B6 vitamer degradation. In terms of biological role, catalyzes the final reaction in the degradation of vitamin B6 from (E)-2-(acetamidomethylene)succinate (E-2AMS) to produce succinic semialdehyde, acetate, ammonia and carbon dioxide. This chain is 2-(acetamidomethylene)succinate hydrolase, found in Mesorhizobium japonicum (strain LMG 29417 / CECT 9101 / MAFF 303099) (Mesorhizobium loti (strain MAFF 303099)).